Consider the following 332-residue polypeptide: Fe(3+) dicitrate transport system permease protein FecC (332 aa).

Over 1–7 (MTAIKHP) the chain is Cytoplasmic. The helical transmembrane segment at 8-28 (VLLWGLPVAALIIIFWLSLFC) threads the bilayer. The Periplasmic portion of the chain corresponds to 29 to 64 (YSAIPVSGADATRALLPGHTPTLPEALVQNLRLPRS). A helical membrane pass occupies residues 65-85 (LVAVLIGASLALAGTLLQTLT). Over 86–100 (HNPMASPSLLGINSG) the chain is Cytoplasmic. The helical transmembrane segment at 101-121 (AALAMALTSALSPTPIAGYSL) threads the bilayer. Residue serine 122 is a topological domain, periplasmic. A helical membrane pass occupies residues 123–143 (FIAACGGGVSWLLVMTAGGGF). The Cytoplasmic portion of the chain corresponds to 144–151 (RHTHDRNK). The chain crosses the membrane as a helical span at residues 152-172 (LILAGIALSAFCMGLTRITLL). Residues 173 to 199 (LAEDHAYGIFYWLAGGVSHARWQDVWQ) lie on the Periplasmic side of the membrane. The helical transmembrane segment at 200–220 (LLPVVVTAVPVVLLLANQLNL) threads the bilayer. The Cytoplasmic segment spans residues 221–244 (LNLSDSTAHTLGVNLTRLRLVINM). A helical transmembrane segment spans residues 245–265 (LVLLLVGACVSVAGPVAFIGL). The Periplasmic segment spans residues 266–307 (LVPHLARFWAGFDQRNVLPVSMLLGATLMLLADVLARALAFP). The chain crosses the membrane as a helical span at residues 308–328 (GDLPAGAVLALIGSPCFVWLV). Residues 329–332 (RRRG) lie on the Cytoplasmic side of the membrane.

Belongs to the binding-protein-dependent transport system permease family. FecCD subfamily. As to quaternary structure, the complex is composed of two ATP-binding proteins (FecE), two transmembrane proteins (FecC and FecD) and a solute-binding protein (FecB). Interacts with FecB.

It is found in the cell inner membrane. Its function is as follows. Part of the ABC transporter complex FecBCDE involved in citrate-dependent Fe(3+) uptake. Probably responsible for the translocation of the substrate across the membrane. The chain is Fe(3+) dicitrate transport system permease protein FecC from Escherichia coli (strain K12).